The primary structure comprises 86 residues: Cyclin-dependent kinase inhibitor 6 (86 aa).

Over residues 1–15 (MAAAAATVTAVQPAA) the composition is skewed to low complexity. The segment at 1–23 (MAAAAATVTAVQPAASSCGKRDG) is disordered.

This sequence belongs to the CDI family. ICK/KRP subfamily.

In Oryza sativa subsp. japonica (Rice), this protein is Cyclin-dependent kinase inhibitor 6 (KRP6).